We begin with the raw amino-acid sequence, 332 residues long: Ketol-acid reductoisomerase (NADP(+)) (332 aa).

The region spanning 2–182 (AKIYHDLEVS…GATRAGVLET (181 aa)) is the KARI N-terminal Rossmann domain. NADP(+)-binding positions include 25-28 (YGSQ), Arg-48, Ser-53, and 83-86 (DTEQ). The active site involves His-108. Gly-134 is an NADP(+) binding site. Residues 183-328 (TFKEETETDL…KVIREMMPWL (146 aa)) form the KARI C-terminal knotted domain. Asp-191, Glu-195, Glu-227, and Glu-231 together coordinate Mg(2+). A substrate-binding site is contributed by Ser-252.

This sequence belongs to the ketol-acid reductoisomerase family. It depends on Mg(2+) as a cofactor.

It catalyses the reaction (2R)-2,3-dihydroxy-3-methylbutanoate + NADP(+) = (2S)-2-acetolactate + NADPH + H(+). The enzyme catalyses (2R,3R)-2,3-dihydroxy-3-methylpentanoate + NADP(+) = (S)-2-ethyl-2-hydroxy-3-oxobutanoate + NADPH + H(+). It functions in the pathway amino-acid biosynthesis; L-isoleucine biosynthesis; L-isoleucine from 2-oxobutanoate: step 2/4. The protein operates within amino-acid biosynthesis; L-valine biosynthesis; L-valine from pyruvate: step 2/4. Functionally, involved in the biosynthesis of branched-chain amino acids (BCAA). Catalyzes an alkyl-migration followed by a ketol-acid reduction of (S)-2-acetolactate (S2AL) to yield (R)-2,3-dihydroxy-isovalerate. In the isomerase reaction, S2AL is rearranged via a Mg-dependent methyl migration to produce 3-hydroxy-3-methyl-2-ketobutyrate (HMKB). In the reductase reaction, this 2-ketoacid undergoes a metal-dependent reduction by NADPH to yield (R)-2,3-dihydroxy-isovalerate. This chain is Ketol-acid reductoisomerase (NADP(+)), found in Dictyoglomus thermophilum (strain ATCC 35947 / DSM 3960 / H-6-12).